We begin with the raw amino-acid sequence, 747 residues long: DNA topoisomerase 4 subunit A (747 aa).

In terms of domain architecture, Topo IIA-type catalytic spans 35-498 (LPFIGDGLKP…EAKMISESDM (464 aa)). Catalysis depends on tyrosine 124, which acts as the O-(5'-phospho-DNA)-tyrosine intermediate.

Belongs to the type II topoisomerase GyrA/ParC subunit family. ParC type 1 subfamily. In terms of assembly, heterotetramer composed of ParC and ParE.

The protein localises to the cell membrane. The enzyme catalyses ATP-dependent breakage, passage and rejoining of double-stranded DNA.. Its function is as follows. Topoisomerase IV is essential for chromosome segregation. It relaxes supercoiled DNA. Performs the decatenation events required during the replication of a circular DNA molecule. In Haemophilus influenzae (strain ATCC 51907 / DSM 11121 / KW20 / Rd), this protein is DNA topoisomerase 4 subunit A.